The following is an 888-amino-acid chain: DNA mismatch repair protein MutS (888 aa).

A disordered region spans residues 249–271 (IGQRPPLSPPSREASGSTMAIDP). 638-645 (GPNMAGKS) lines the ATP pocket.

It belongs to the DNA mismatch repair MutS family.

In terms of biological role, this protein is involved in the repair of mismatches in DNA. It is possible that it carries out the mismatch recognition step. This protein has a weak ATPase activity. This is DNA mismatch repair protein MutS from Nitrobacter winogradskyi (strain ATCC 25391 / DSM 10237 / CIP 104748 / NCIMB 11846 / Nb-255).